Reading from the N-terminus, the 417-residue chain is Lactose permease (417 aa).

Position 1 is an N-formylmethionine; partial (Met1). The Cytoplasmic segment spans residues 1 to 7 (MYYLKNT). Residues 8 to 34 (NFWMFGLFFFFYFFIMGAYFPFFPIWL) traverse the membrane as a helical segment. Residues 35–41 (HDINHIS) are Periplasmic-facing. A helical membrane pass occupies residues 42–70 (KSDTGIIFAAISLFSLLFQPLFGLLSDKL). The Cytoplasmic segment spans residues 71–74 (GLRK). A helical membrane pass occupies residues 75–100 (YLLWIITGMLVMFAPFFIFIFGPLLQ). Over 101–104 (YNIL) the chain is Periplasmic. The helical transmembrane segment at 105–129 (VGSIVGGIYLGFCFNAGAPAVEAFI) threads the bilayer. Residues 130–140 (EKVSRRSNFEF) lie on the Cytoplasmic side of the membrane. The helical transmembrane segment at 141–163 (GRARMFGCVGWALCASIVGIMFT) threads the bilayer. Topologically, residues 164-166 (INN) are periplasmic. A helical transmembrane segment spans residues 167–186 (QFVFWLGSGCALILAVLLFF). The Cytoplasmic portion of the chain corresponds to 187–220 (AKTDAPSSATVANAVGANHSAFSLKLALELFRQP). Residues 221–249 (KLWFLSLYVIGVSCTYDVFDQQFANFFTS) traverse the membrane as a helical segment. Residues 250-253 (FFAT) lie on the Periplasmic side of the membrane. The helical transmembrane segment at 254–278 (GEQGTRVFGYVTTMGELLNASIMFF) threads the bilayer. The Cytoplasmic segment spans residues 279–288 (APLIINRIGG). Residues 289-308 (KNALLLAGTIMSVRIIGSSF) traverse the membrane as a helical segment. At 309 to 311 (ATS) the chain is on the periplasmic side. A helical membrane pass occupies residues 312–334 (ALEVVILKTLHMFEVPFLLVGCF). Residues 335 to 346 (KYITSQFEVRFS) lie on the Cytoplasmic side of the membrane. Residues 347–374 (ATIYLVCFCFFKQLAMIFMSVLAGNMYE) form a helical membrane-spanning segment. At 375–377 (SIG) the chain is on the periplasmic side. A helical membrane pass occupies residues 378 to 398 (FQGAYLVLGLVALGFTLISVF). Topologically, residues 399–417 (TLSGPGPLSLLRRQVNEVA) are cytoplasmic.

In terms of assembly, monomer.

It is found in the cell inner membrane. It catalyses the reaction lactose(in) + H(+)(in) = lactose(out) + H(+)(out). The catalysed reaction is melibiose(in) + H(+)(in) = melibiose(out) + H(+)(out). Its activity is regulated as follows. Inhibited by the proton ionophore carbonyl cyanide m-chlorophenylhydrazone (CCCP). Responsible for transport of beta-galactosides into the cell, with the concomitant import of a proton (symport system). Can transport lactose, melibiose, the synthetic disaccharide lactulose or the analog methyl-1-thio-beta,D-galactopyranoside (TMG), but not sucrose or fructose. The substrate specificity is directed toward the galactopyranosyl moiety of the substrate. This chain is Lactose permease, found in Escherichia coli (strain K12).